The following is a 414-amino-acid chain: Putative competence-damage inducible protein (414 aa).

This sequence belongs to the CinA family.

The sequence is that of Putative competence-damage inducible protein from Listeria monocytogenes serotype 4a (strain HCC23).